A 741-amino-acid polypeptide reads, in one-letter code: Ion-translocating oxidoreductase complex subunit C (741 aa).

4Fe-4S ferredoxin-type domains follow at residues 369 to 397 (GEPQEEQSCIRCSACADACPADLLPQQLY) and 407 to 436 (KATTHNIADCIECGACAWVCPSNIPLVQYF). [4Fe-4S] cluster contacts are provided by cysteine 377, cysteine 380, cysteine 383, cysteine 387, cysteine 416, cysteine 419, cysteine 422, and cysteine 426. A disordered region spans residues 627-654 (IARAKARKLEQQQQANAEPEEQVDPRKA).

The protein belongs to the 4Fe4S bacterial-type ferredoxin family. RnfC subfamily. The complex is composed of six subunits: RsxA, RsxB, RsxC, RsxD, RsxE and RsxG. Requires [4Fe-4S] cluster as cofactor.

It is found in the cell inner membrane. In terms of biological role, part of a membrane-bound complex that couples electron transfer with translocation of ions across the membrane. Required to maintain the reduced state of SoxR. This chain is Ion-translocating oxidoreductase complex subunit C, found in Escherichia coli O127:H6 (strain E2348/69 / EPEC).